The chain runs to 609 residues: Wee1-like protein kinase (609 aa).

A compositionally biased stretch (basic and acidic residues) spans methionine 1–methionine 10. Disordered stretches follow at residues methionine 1–proline 88 and proline 147–proline 166. Phosphoserine occurs at positions 23, 25, and 27. The segment covering arginine 37–proline 48 has biased composition (basic and acidic residues). Residue threonine 47 is modified to Phosphothreonine. Serine 52 is subject to Phosphoserine. Over residues leucine 153 to threonine 165 the composition is skewed to polar residues. Residue threonine 165 is modified to Phosphothreonine. Position 168 is a phosphoserine (serine 168). The region spanning phenylalanine 239–leucine 517 is the Protein kinase domain. ATP contacts are provided by residues isoleucine 245–valine 253 and lysine 268. Aspartate 361 functions as the Proton acceptor in the catalytic mechanism. 2 residues coordinate Mg(2+): asparagine 366 and aspartate 412.

The protein belongs to the protein kinase superfamily. Ser/Thr protein kinase family. WEE1 subfamily. Mg(2+) is required as a cofactor. Post-translationally, phosphorylated during M and G1 phases. In terms of tissue distribution, expressed in embryos; expression remains high in the proliferating cells of the central nervous system well after cells in the rest of the embryo have ceased dividing.

The protein localises to the nucleus. The enzyme catalyses L-tyrosyl-[protein] + ATP = O-phospho-L-tyrosyl-[protein] + ADP + H(+). Its activity is regulated as follows. Negatively regulated by phosphorylation in the M-phase. Functionally, acts as a negative regulator of entry into mitosis (G2 to M transition). This kinase specifically phosphorylates and inactivates cyclin B1-complexed CDC2. The chain is Wee1-like protein kinase from Drosophila melanogaster (Fruit fly).